A 259-amino-acid polypeptide reads, in one-letter code: Pimeloyl-[acyl-carrier protein] methyl ester esterase (259 aa).

The AB hydrolase-1 domain occupies 16-241 (FVMLHGWGMN…QSAHVPFISH (226 aa)). Substrate-binding positions include tryptophan 22, 82-83 (SM), and 143-147 (FLLLQ). Serine 82 (nucleophile) is an active-site residue. Catalysis depends on residues aspartate 207 and histidine 235. Position 235 (histidine 235) interacts with substrate.

This sequence belongs to the AB hydrolase superfamily. Carboxylesterase BioH family. In terms of assembly, monomer.

It localises to the cytoplasm. The enzyme catalyses 6-carboxyhexanoyl-[ACP] methyl ester + H2O = 6-carboxyhexanoyl-[ACP] + methanol + H(+). It participates in cofactor biosynthesis; biotin biosynthesis. Functionally, the physiological role of BioH is to remove the methyl group introduced by BioC when the pimeloyl moiety is complete. It allows to synthesize pimeloyl-ACP via the fatty acid synthetic pathway through the hydrolysis of the ester bonds of pimeloyl-ACP esters. The polypeptide is Pimeloyl-[acyl-carrier protein] methyl ester esterase (Hamiltonella defensa subsp. Acyrthosiphon pisum (strain 5AT)).